We begin with the raw amino-acid sequence, 184 residues long: Photosystem I assembly protein Ycf3 (184 aa).

TPR repeat units follow at residues 31–64 (AFAY…DEDQ), 68–101 (SYTL…NSNL), and 131–164 (MEIS…APDN).

Belongs to the Ycf3 family.

Its subcellular location is the plastid. The protein resides in the chloroplast thylakoid membrane. Its function is as follows. Essential for the assembly of the photosystem I (PSI) complex. May act as a chaperone-like factor to guide the assembly of the PSI subunits. This is Photosystem I assembly protein Ycf3 from Thalassiosira pseudonana (Marine diatom).